A 287-amino-acid polypeptide reads, in one-letter code: 4-hydroxybenzoate octaprenyltransferase (287 aa).

Transmembrane regions (helical) follow at residues 7–27 (FISY…LLLW), 30–50 (LWAL…LIFV), 94–114 (VAVA…LNAF), 118–138 (LSVL…FFAM), 142–162 (VLGI…LDFI), 167–187 (WFLF…YAMV), 209–229 (VVVI…VAQL), 235–255 (YFLV…KLVS), and 266–286 (FRHN…GLGV).

The protein belongs to the UbiA prenyltransferase family. Mg(2+) serves as cofactor.

The protein localises to the cell inner membrane. The catalysed reaction is all-trans-octaprenyl diphosphate + 4-hydroxybenzoate = 4-hydroxy-3-(all-trans-octaprenyl)benzoate + diphosphate. It participates in cofactor biosynthesis; ubiquinone biosynthesis. In terms of biological role, catalyzes the prenylation of para-hydroxybenzoate (PHB) with an all-trans polyprenyl group. Mediates the second step in the final reaction sequence of ubiquinone-8 (UQ-8) biosynthesis, which is the condensation of the polyisoprenoid side chain with PHB, generating the first membrane-bound Q intermediate 3-octaprenyl-4-hydroxybenzoate. The sequence is that of 4-hydroxybenzoate octaprenyltransferase from Polynucleobacter necessarius subsp. necessarius (strain STIR1).